The primary structure comprises 448 residues: Cysteine--tRNA ligase (448 aa).

Cysteine 29 is a Zn(2+) binding site. Residues 31–41 carry the 'HIGH' region motif; the sequence is PTVYDTAHIGN. Residues 79-91 show a composition bias toward basic and acidic residues; it reads ATTGADRGADQAH. The interval 79-106 is disordered; the sequence is ATTGADRGADQAHRGPLPRRHGPLNAAP. Zn(2+) contacts are provided by cysteine 206 and glutamate 235. The 'KMSKS' region motif lies at 265 to 269; that stretch reads RMSKS. An ATP-binding site is contributed by lysine 268.

The protein belongs to the class-I aminoacyl-tRNA synthetase family. As to quaternary structure, monomer. Zn(2+) is required as a cofactor.

It localises to the cytoplasm. It carries out the reaction tRNA(Cys) + L-cysteine + ATP = L-cysteinyl-tRNA(Cys) + AMP + diphosphate. This Azospirillum brasilense protein is Cysteine--tRNA ligase (cysS).